A 672-amino-acid chain; its full sequence is Probable urocanate hydratase (672 aa).

NAD(+) contacts are provided by residues glycine 128–glycine 129, glutamine 206, glycine 253–serine 255, glutamate 273, asparagine 318–valine 319, glutamine 340–histidine 344, tyrosine 351–tyrosine 352, tyrosine 400, and glycine 592.

Belongs to the urocanase family. Requires NAD(+) as cofactor.

It catalyses the reaction 4-imidazolone-5-propanoate = trans-urocanate + H2O. It functions in the pathway amino-acid degradation; L-histidine degradation into L-glutamate; N-formimidoyl-L-glutamate from L-histidine: step 2/3. This is Probable urocanate hydratase (uroc1) from Dictyostelium discoideum (Social amoeba).